A 528-amino-acid chain; its full sequence is Succinate-semialdehyde dehydrogenase, mitochondrial (528 aa).

The N-terminal 34 residues, 1–34, are a transit peptide targeting the mitochondrion; that stretch reads MVIGAAARVAIGGCRKLISSHTSLLLVSSQCRQM. Position 196–198 (196–198) interacts with NAD(+); the sequence is TPW. Arginine 207 serves as a coordination point for substrate. NAD(+)-binding positions include 222 to 225, 275 to 280, and glutamate 297; these read KPSE and GSTAVG. Glutamate 297 serves as the catalytic Proton acceptor. Arginine 325 serves as a coordination point for substrate. The active-site Nucleophile is the cysteine 331. An intrachain disulfide couples cysteine 331 to cysteine 333. 428–430 provides a ligand contact to NAD(+); the sequence is EIF. Serine 488 is a binding site for substrate.

The protein belongs to the aldehyde dehydrogenase family. Homotetramer. Expressed in developing leaf tissues.

The protein localises to the mitochondrion matrix. It catalyses the reaction succinate semialdehyde + NAD(+) + H2O = succinate + NADH + 2 H(+). The protein operates within amino-acid degradation; 4-aminobutanoate degradation. Its activity is regulated as follows. Competitive inhibition by NADH. Inhibited by ATP, ADP and AMP. Redox-regulated. Inhibited under oxydizing conditions. Oxidizes specifically succinate semialdehyde. Involved in plant response to environmental stress by preventing the accumulation of reactive oxygen species, probably by regulating proline, gamma-hydroxybutyrate (GHB) and gamma-aminobutyrate (GABA) levels. Required for the maintenance of the shoot apical meristem (SAM) structure and subsequent adaxial-abaxial axis-dependent development of cotyledons and leaves. The polypeptide is Succinate-semialdehyde dehydrogenase, mitochondrial (Arabidopsis thaliana (Mouse-ear cress)).